A 144-amino-acid chain; its full sequence is Large ribosomal subunit protein uL15 (144 aa).

A disordered region spans residues 1-54; sequence MRLNTLSPAPGRVTSRKRVGRGIGSGLGKTAGRGHKGLKSRSGGTVKPGFEGGQ. Residues 21 to 31 show a composition bias toward gly residues; that stretch reads RGIGSGLGKTA.

The protein belongs to the universal ribosomal protein uL15 family. In terms of assembly, part of the 50S ribosomal subunit.

Functionally, binds to the 23S rRNA. The chain is Large ribosomal subunit protein uL15 from Teredinibacter turnerae (strain ATCC 39867 / T7901).